We begin with the raw amino-acid sequence, 93 residues long: Co-chaperonin GroES (93 aa).

Belongs to the GroES chaperonin family. Heptamer of 7 subunits arranged in a ring. Interacts with the chaperonin GroEL.

The protein resides in the cytoplasm. Its function is as follows. Together with the chaperonin GroEL, plays an essential role in assisting protein folding. The GroEL-GroES system forms a nano-cage that allows encapsulation of the non-native substrate proteins and provides a physical environment optimized to promote and accelerate protein folding. GroES binds to the apical surface of the GroEL ring, thereby capping the opening of the GroEL channel. This Streptococcus gordonii (strain Challis / ATCC 35105 / BCRC 15272 / CH1 / DL1 / V288) protein is Co-chaperonin GroES.